Here is a 444-residue protein sequence, read N- to C-terminus: Ribulose bisphosphate carboxylase large chain (444 aa).

Lysine 5 is subject to N6,N6,N6-trimethyllysine. Residues asparagine 114 and threonine 164 each coordinate substrate. Lysine 166 serves as the catalytic Proton acceptor. Lysine 168 contributes to the substrate binding site. Mg(2+) contacts are provided by lysine 192, aspartate 194, and glutamate 195. At lysine 192 the chain carries N6-carboxylysine. Histidine 285 serves as the catalytic Proton acceptor. Substrate-binding residues include arginine 286, histidine 318, and serine 370.

Belongs to the RuBisCO large chain family. Type I subfamily. As to quaternary structure, heterohexadecamer of 8 large chains and 8 small chains; disulfide-linked. The disulfide link is formed within the large subunit homodimers. It depends on Mg(2+) as a cofactor. Post-translationally, the disulfide bond which can form in the large chain dimeric partners within the hexadecamer appears to be associated with oxidative stress and protein turnover.

Its subcellular location is the plastid. It is found in the chloroplast. It catalyses the reaction 2 (2R)-3-phosphoglycerate + 2 H(+) = D-ribulose 1,5-bisphosphate + CO2 + H2O. The enzyme catalyses D-ribulose 1,5-bisphosphate + O2 = 2-phosphoglycolate + (2R)-3-phosphoglycerate + 2 H(+). RuBisCO catalyzes two reactions: the carboxylation of D-ribulose 1,5-bisphosphate, the primary event in carbon dioxide fixation, as well as the oxidative fragmentation of the pentose substrate in the photorespiration process. Both reactions occur simultaneously and in competition at the same active site. The protein is Ribulose bisphosphate carboxylase large chain of Botrychium strictum (Fern).